The sequence spans 403 residues: Palmitoyltransferase ZDHHC23-A (403 aa).

The Cytoplasmic segment spans residues 1-70 (MKRERFKPPE…ADRLGVSCCT (70 aa)). The chain crosses the membrane as a helical span at residues 71 to 91 (VGPLRLELSVLPPMVLIPGLL). Position 92 (Arg92) is a topological domain, lumenal. A helical membrane pass occupies residues 93-113 (VAAINCLLGVIILTALPLLVL). Over 114 to 125 (WYYYMTHRRKRR) the chain is Cytoplasmic. A helical transmembrane segment spans residues 126 to 146 (TLFFLSLALFSLAYMYYLFLT). The Lumenal portion of the chain corresponds to 147-153 (EIVPRGD). The chain crosses the membrane as a helical span at residues 154-174 (VTHLQVVTATTGMMLTLISLV). Residues 175 to 268 (RTKQGPGFVK…NSCVGQANHR (94 aa)) are Cytoplasmic-facing. Positions 225-275 (KKCPVCQLVRPPRAGHCRICGACVLRMDHHCVWINSCVGQANHRQFILTLL) constitute a DHHC domain. The active-site S-palmitoyl cysteine intermediate is the Cys255. Residues 269-289 (QFILTLLLFLLTSFYGISLVL) traverse the membrane as a helical segment. Residues 290–319 (RSICPKQSLFTAMLYCPGVYNQYSTALCFT) are Lumenal-facing. Residues 320-340 (CVWYSVIITGGLLHLFILQII) form a helical membrane-spanning segment. Residues 341 to 403 (NVSCNVTERE…GSSLNLTDMV (63 aa)) are Cytoplasmic-facing.

This sequence belongs to the DHHC palmitoyltransferase family.

The protein localises to the golgi apparatus membrane. It localises to the golgi apparatus. It is found in the trans-Golgi network membrane. It carries out the reaction L-cysteinyl-[protein] + hexadecanoyl-CoA = S-hexadecanoyl-L-cysteinyl-[protein] + CoA. Functionally, palmitoyltransferase that could catalyze the addition of palmitate onto various protein substrates and be involved in a variety of cellular processes. The protein is Palmitoyltransferase ZDHHC23-A (zdhhc23a) of Danio rerio (Zebrafish).